We begin with the raw amino-acid sequence, 656 residues long: Methionine--tRNA ligase (656 aa).

The 'HIGH' region signature appears at 11–21 (YYVNDIPHIGH). Residues cysteine 126, cysteine 129, cysteine 147, and cysteine 150 each coordinate Zn(2+). The short motif at 301–305 (KMSKS) is the 'KMSKS' region element. An ATP-binding site is contributed by lysine 304. Residues 555-656 (DFKKVEIKVG…REKIAGSLIS (102 aa)) enclose the tRNA-binding domain.

The protein belongs to the class-I aminoacyl-tRNA synthetase family. MetG type 2A subfamily. As to quaternary structure, homodimer. Zn(2+) serves as cofactor.

It localises to the cytoplasm. The enzyme catalyses tRNA(Met) + L-methionine + ATP = L-methionyl-tRNA(Met) + AMP + diphosphate. In terms of biological role, is required not only for elongation of protein synthesis but also for the initiation of all mRNA translation through initiator tRNA(fMet) aminoacylation. The sequence is that of Methionine--tRNA ligase (metG) from Helicobacter pylori (strain J99 / ATCC 700824) (Campylobacter pylori J99).